A 133-amino-acid polypeptide reads, in one-letter code: Small ribosomal subunit protein uS11 (133 aa).

The protein belongs to the universal ribosomal protein uS11 family. Part of the 30S ribosomal subunit.

Located on the platform of the 30S subunit. This Aeropyrum pernix (strain ATCC 700893 / DSM 11879 / JCM 9820 / NBRC 100138 / K1) protein is Small ribosomal subunit protein uS11.